The chain runs to 337 residues: MVVKVGINGFGRIGRIVFRNAIEHNDVDIVAVNDPFIEPHYAAYMLKYDSTHGQFKGDIKVDGNNLTVNGKTIRFHMEKDPANIPWSETGAYYVVESTGVFTTTEKAKAHLKGGAKKVVISAPSPDAPMFVMGVNHETYKPDIEALSNASCTTNCLAPLAKVIHDKYTIIEGLMTTIHSYTATQKVVDGPSAKDWRGGRTAAQNIIPSSTGAAKAVGKVIPELNGKLTGMAMRVPTANVSVVDLTVRIEKGASYDEIKQAVKEASEGSLNGILGYTEDDIVSTDLNGDNRSSIFDAKAGISLNKNFVKLVSWYDNEWGYSRRVLDLLVYIAKIDGNA.

NAD(+) contacts are provided by residues 12–13 (RI), Asp-34, and Lys-79. Residues 150-152 (SCT), Thr-181, 210-211 (TG), and Arg-233 each bind D-glyceraldehyde 3-phosphate. Cys-151 acts as the Nucleophile in catalysis. Asn-315 is a binding site for NAD(+).

Belongs to the glyceraldehyde-3-phosphate dehydrogenase family. As to quaternary structure, homotetramer.

The protein resides in the cytoplasm. The enzyme catalyses D-glyceraldehyde 3-phosphate + phosphate + NAD(+) = (2R)-3-phospho-glyceroyl phosphate + NADH + H(+). The protein operates within carbohydrate degradation; glycolysis; pyruvate from D-glyceraldehyde 3-phosphate: step 1/5. This chain is Glyceraldehyde-3-phosphate dehydrogenase (GPD1), found in Cochliobolus heterostrophus (Southern corn leaf blight fungus).